A 138-amino-acid polypeptide reads, in one-letter code: Basic phospholipase A2 Bs-N6 (138 aa).

The first 16 residues, 1 to 16, serve as a signal peptide directing secretion; it reads MRTLWIVAVLLVGVEG. Disulfide bonds link C42–C131, C44–C60, C59–C111, C65–C138, C66–C104, C73–C97, and C91–C102. Residues Y43, G45, and G47 each coordinate Ca(2+). H63 is a catalytic residue. D64 lines the Ca(2+) pocket. Residue D105 is part of the active site.

In terms of assembly, monomer. Ca(2+) is required as a cofactor. Post-translationally, contains 7 disulfide bonds. Expressed by the venom gland.

Its subcellular location is the secreted. The enzyme catalyses a 1,2-diacyl-sn-glycero-3-phosphocholine + H2O = a 1-acyl-sn-glycero-3-phosphocholine + a fatty acid + H(+). Its function is as follows. Snake venom phospholipase A2 (PLA2) that shows myotoxic activities. PLA2 catalyzes the calcium-dependent hydrolysis of the 2-acyl groups in 3-sn-phosphoglycerides. This chain is Basic phospholipase A2 Bs-N6, found in Bothriechis schlegelii (Eyelash palm pitviper).